Consider the following 407-residue polypeptide: Argininosuccinate synthase (407 aa).

ATP contacts are provided by residues 16-24 (AYSGGLDTS) and A44. Y96 and S101 together coordinate L-citrulline. G126 contributes to the ATP binding site. L-aspartate is bound by residues T128, N132, and D133. N132 provides a ligand contact to L-citrulline. Residues R136, S185, S194, E270, and Y282 each coordinate L-citrulline.

It belongs to the argininosuccinate synthase family. Type 1 subfamily. In terms of assembly, homotetramer.

It is found in the cytoplasm. The catalysed reaction is L-citrulline + L-aspartate + ATP = 2-(N(omega)-L-arginino)succinate + AMP + diphosphate + H(+). It functions in the pathway amino-acid biosynthesis; L-arginine biosynthesis; L-arginine from L-ornithine and carbamoyl phosphate: step 2/3. The chain is Argininosuccinate synthase from Shewanella frigidimarina (strain NCIMB 400).